Reading from the N-terminus, the 2524-residue chain is Highly reducing polyketide synthase Preu5 (2524 aa).

The Ketosynthase family 3 (KS3) domain occupies aspartate 5–lysine 426. Catalysis depends on for beta-ketoacyl synthase activity residues cysteine 175, histidine 310, and histidine 350. Residues aspartate 431–asparagine 470 are disordered. A compositionally biased stretch (low complexity) spans threonine 437–glycine 464. The malonyl-CoA:ACP transacylase (MAT) domain stretch occupies residues valine 559–valine 882. Serine 648 functions as the For malonyltransferase activity in the catalytic mechanism. The segment at histidine 950 to methionine 1084 is N-terminal hotdog fold. The 315-residue stretch at histidine 950 to asparagine 1264 folds into the PKS/mFAS DH domain. The interval histidine 950–aspartate 1266 is dehydratase (DH) domain. The Proton acceptor; for dehydratase activity role is filled by histidine 982. Residues alanine 1102 to asparagine 1264 are C-terminal hotdog fold. The active-site Proton donor; for dehydratase activity is the aspartate 1171. Positions serine 1418–glutamine 1611 are methyltransferase (CMet) domain. The tract at residues glycine 1825–valine 2139 is enoylreductase (ER) domain. Positions glycine 2164–valine 2339 are ketoreductase (KR) domain. Residues aspartate 2445 to arginine 2522 form the Carrier domain. O-(pantetheine 4'-phosphoryl)serine is present on serine 2482.

Requires pantetheine 4'-phosphate as cofactor.

Functionally, highly reducing polyketide synthase; part of a gene cluster that mediates the biosynthesis of a yet unidentified natural product. The sequence is that of Highly reducing polyketide synthase Preu5 from Preussia isomera (Coprophilous fungus).